A 181-amino-acid chain; its full sequence is MGLSFTKLFSRLFAKKEMRILMVGLDAAGKTTILYKLKLGEIVTTIPTIGFNVETVEYKNISFTVWDVGGQDKIRPLWRHYFQNTQGLIFVVDSNDRDRVVEARDELHRMLNEDELRDAVLLVFANKQDLPNAMNAAEIIDKLGLHSLRQRHWYIQSTCATSGEGLYEGLDWLSNNIASKS.

A lipid anchor (N-myristoyl glycine) is attached at Gly-2. GTP contacts are provided by residues 24-31 (GLDAAGKT), 67-71 (DVGGQ), and 126-129 (NKQD).

This sequence belongs to the small GTPase superfamily. Arf family.

Its subcellular location is the golgi apparatus. It catalyses the reaction GTP + H2O = GDP + phosphate + H(+). In terms of biological role, GTP-binding protein involved in protein trafficking; may modulate vesicle budding and uncoating within the Golgi apparatus. The sequence is that of ADP-ribosylation factor 1 (ARF1) from Daucus carota (Wild carrot).